The chain runs to 350 residues: [LysW]-L-2-aminoadipate/[LysW]-L-glutamate phosphate reductase (350 aa).

10 to 13 is a binding site for NADP(+); sequence SGYT. Cys150 is an active-site residue. Asn317 contacts NADP(+).

The protein belongs to the NAGSA dehydrogenase family. Type 1 subfamily. LysY sub-subfamily.

The protein resides in the cytoplasm. It catalyses the reaction [amino-group carrier protein]-C-terminal-N-(1-carboxy-5-oxopentan-1-yl)-L-glutamine + phosphate + NADP(+) = [amino-group carrier protein]-C-terminal-N-(1-carboxy-5-phosphooxy-5-oxopentan-1-yl)-L-glutamine + NADPH + H(+). It carries out the reaction [amino-group carrier protein]-C-terminal-gamma-(L-glutamyl-5-semialdehyde)-L-glutamate + phosphate + NADP(+) = [amino-group carrier protein]-C-terminal-gamma-(5-phospho-L-glutamyl)-L-glutamate + NADPH + H(+). Its pathway is amino-acid biosynthesis; L-lysine biosynthesis via AAA pathway; L-lysine from L-alpha-aminoadipate (Thermus route): step 3/5. The protein operates within amino-acid biosynthesis; L-arginine biosynthesis. Functionally, involved in both the arginine and lysine biosynthetic pathways. The sequence is that of [LysW]-L-2-aminoadipate/[LysW]-L-glutamate phosphate reductase from Sulfolobus acidocaldarius (strain ATCC 33909 / DSM 639 / JCM 8929 / NBRC 15157 / NCIMB 11770).